Consider the following 444-residue polypeptide: Protein CLP1 homolog (444 aa).

ATP is bound by residues E33, K72, and 140–145; that span reads DSGKST.

The protein belongs to the Clp1 family. Clp1 subfamily. Interacts with PCFS4 and SYM5. Forms a complex with cleavage and polyadenylation specificity factor (CPSF) subunits CPSF30, CPSF100, PCFS1, PCFS4, PCFS5, CPSF160 and FY.

Its subcellular location is the nucleus. Required for endonucleolytic cleavage during polyadenylation-dependent pre-mRNA 3'-end formation. Functions in gametophyte, embryo and postembryotic development. The protein is Protein CLP1 homolog (CLPS3) of Arabidopsis thaliana (Mouse-ear cress).